The following is a 455-amino-acid chain: Probable alpha-galactosidase B (455 aa).

The N-terminal stretch at 1–16 (MIEFLALITLISRANA) is a signal peptide. Intrachain disulfides connect Cys-39/Cys-71 and Cys-121/Cys-151. Asn-42 carries N-linked (GlcNAc...) asparagine glycosylation. Asp-149 (nucleophile) is an active-site residue. N-linked (GlcNAc...) asparagine glycosylation is found at Asn-177 and Asn-192. Residue 222 to 226 (NWGNA) coordinates substrate. Asp-244 serves as the catalytic Proton donor. Asn-395 carries N-linked (GlcNAc...) asparagine glycosylation.

It belongs to the glycosyl hydrolase 27 family.

The protein localises to the secreted. The enzyme catalyses Hydrolysis of terminal, non-reducing alpha-D-galactose residues in alpha-D-galactosides, including galactose oligosaccharides, galactomannans and galactolipids.. In terms of biological role, hydrolyzes a variety of simple alpha-D-galactoside as well as more complex molecules such as oligosaccharides and polysaccharides. This is Probable alpha-galactosidase B (aglB) from Emericella nidulans (strain FGSC A4 / ATCC 38163 / CBS 112.46 / NRRL 194 / M139) (Aspergillus nidulans).